The chain runs to 1018 residues: DNA polymerase gamma (1018 aa).

Belongs to the DNA polymerase type-A family. Mg(2+) serves as cofactor.

It is found in the mitochondrion. It catalyses the reaction DNA(n) + a 2'-deoxyribonucleoside 5'-triphosphate = DNA(n+1) + diphosphate. Its function is as follows. Involved in the replication of mitochondrial DNA. The sequence is that of DNA polymerase gamma (mip1) from Schizosaccharomyces pombe (strain 972 / ATCC 24843) (Fission yeast).